The primary structure comprises 969 residues: Protein translocase subunit SecA (969 aa).

ATP-binding positions include Q99, 117-121 (GEGKT), and D631.

It belongs to the SecA family. In terms of assembly, monomer and homodimer. Part of the essential Sec protein translocation apparatus which comprises SecA, SecYEG and auxiliary proteins SecDF. Other proteins may also be involved.

It localises to the cell inner membrane. The protein localises to the cytoplasm. It catalyses the reaction ATP + H2O + cellular proteinSide 1 = ADP + phosphate + cellular proteinSide 2.. Its function is as follows. Part of the Sec protein translocase complex. Interacts with the SecYEG preprotein conducting channel. Has a central role in coupling the hydrolysis of ATP to the transfer of proteins into and across the cell membrane, serving as an ATP-driven molecular motor driving the stepwise translocation of polypeptide chains across the membrane. This is Protein translocase subunit SecA from Chlamydia trachomatis serovar L2 (strain ATCC VR-902B / DSM 19102 / 434/Bu).